The sequence spans 447 residues: GTPase Der (447 aa).

2 consecutive EngA-type G domains span residues glutamine 4 to glutamate 165 and leucine 180 to asparagine 357. GTP contacts are provided by residues glycine 10–serine 17, aspartate 57–leucine 61, asparagine 119–glutamate 122, glycine 186–serine 193, aspartate 233–leucine 237, and asparagine 298–aspartate 301. Residues lysine 358–lysine 443 enclose the KH-like domain.

This sequence belongs to the TRAFAC class TrmE-Era-EngA-EngB-Septin-like GTPase superfamily. EngA (Der) GTPase family. As to quaternary structure, associates with the 50S ribosomal subunit.

Its function is as follows. GTPase that plays an essential role in the late steps of ribosome biogenesis. This is GTPase Der from Rickettsia rickettsii (strain Sheila Smith).